Reading from the N-terminus, the 179-residue chain is Large ribosomal subunit protein uL5 (179 aa).

It belongs to the universal ribosomal protein uL5 family. As to quaternary structure, part of the 50S ribosomal subunit; part of the 5S rRNA/L5/L18/L25 subcomplex. Contacts the 5S rRNA and the P site tRNA. Forms a bridge to the 30S subunit in the 70S ribosome.

This is one of the proteins that bind and probably mediate the attachment of the 5S RNA into the large ribosomal subunit, where it forms part of the central protuberance. In the 70S ribosome it contacts protein S13 of the 30S subunit (bridge B1b), connecting the 2 subunits; this bridge is implicated in subunit movement. Contacts the P site tRNA; the 5S rRNA and some of its associated proteins might help stabilize positioning of ribosome-bound tRNAs. In Rickettsia bellii (strain OSU 85-389), this protein is Large ribosomal subunit protein uL5.